The sequence spans 472 residues: 3-isopropylmalate dehydratase large subunit (472 aa).

The [4Fe-4S] cluster site is built by Cys-347, Cys-407, and Cys-410.

This sequence belongs to the aconitase/IPM isomerase family. LeuC type 1 subfamily. In terms of assembly, heterodimer of LeuC and LeuD. Requires [4Fe-4S] cluster as cofactor.

The catalysed reaction is (2R,3S)-3-isopropylmalate = (2S)-2-isopropylmalate. Its pathway is amino-acid biosynthesis; L-leucine biosynthesis; L-leucine from 3-methyl-2-oxobutanoate: step 2/4. In terms of biological role, catalyzes the isomerization between 2-isopropylmalate and 3-isopropylmalate, via the formation of 2-isopropylmaleate. This is 3-isopropylmalate dehydratase large subunit from Synechococcus sp. (strain CC9902).